We begin with the raw amino-acid sequence, 185 residues long: Elongation factor P (185 aa).

Belongs to the elongation factor P family.

The protein localises to the cytoplasm. It functions in the pathway protein biosynthesis; polypeptide chain elongation. Functionally, involved in peptide bond synthesis. Stimulates efficient translation and peptide-bond synthesis on native or reconstituted 70S ribosomes in vitro. Probably functions indirectly by altering the affinity of the ribosome for aminoacyl-tRNA, thus increasing their reactivity as acceptors for peptidyl transferase. This is Elongation factor P from Agathobacter rectalis (strain ATCC 33656 / DSM 3377 / JCM 17463 / KCTC 5835 / VPI 0990) (Eubacterium rectale).